The chain runs to 122 residues: Small ribosomal subunit protein bS16 (122 aa).

It belongs to the bacterial ribosomal protein bS16 family.

This Prochlorococcus marinus (strain MIT 9313) protein is Small ribosomal subunit protein bS16.